The sequence spans 360 residues: DNA polymerase IV (360 aa).

The 184-residue stretch at 8 to 191 (VLHVDMDSFF…LPVGRIPGIG (184 aa)) folds into the UmuC domain. Mg(2+)-binding residues include Asp-12 and Asp-110. Glu-111 is an active-site residue.

Belongs to the DNA polymerase type-Y family. In terms of assembly, monomer. Mg(2+) serves as cofactor.

The protein localises to the cytoplasm. The catalysed reaction is DNA(n) + a 2'-deoxyribonucleoside 5'-triphosphate = DNA(n+1) + diphosphate. Functionally, poorly processive, error-prone DNA polymerase involved in untargeted mutagenesis. Copies undamaged DNA at stalled replication forks, which arise in vivo from mismatched or misaligned primer ends. These misaligned primers can be extended by PolIV. Exhibits no 3'-5' exonuclease (proofreading) activity. May be involved in translesional synthesis. The chain is DNA polymerase IV from Methanoculleus marisnigri (strain ATCC 35101 / DSM 1498 / JR1).